A 333-amino-acid chain; its full sequence is Transaldolase (333 aa).

The Schiff-base intermediate with substrate role is filled by lysine 136.

The protein belongs to the transaldolase family. Type 1 subfamily. In terms of assembly, homodimer.

Its subcellular location is the cytoplasm. The catalysed reaction is D-sedoheptulose 7-phosphate + D-glyceraldehyde 3-phosphate = D-erythrose 4-phosphate + beta-D-fructose 6-phosphate. Its pathway is carbohydrate degradation; pentose phosphate pathway; D-glyceraldehyde 3-phosphate and beta-D-fructose 6-phosphate from D-ribose 5-phosphate and D-xylulose 5-phosphate (non-oxidative stage): step 2/3. Its function is as follows. Transaldolase is important for the balance of metabolites in the pentose-phosphate pathway. The polypeptide is Transaldolase (Acidobacterium capsulatum (strain ATCC 51196 / DSM 11244 / BCRC 80197 / JCM 7670 / NBRC 15755 / NCIMB 13165 / 161)).